We begin with the raw amino-acid sequence, 1116 residues long: Surface layer protein (1116 aa).

The signal sequence occupies residues 1–53; it reads MQDSGFKKKDRSTNIPQEQFVYTRGGEHKVMKKVVNSVLASALAITVAPMAFA. SLH domains are found at residues 54-117, 118-181, and 182-231; these read AEDT…KLAQ, FNTT…RGVW, and PNSM…YGTD.

Its subcellular location is the secreted. It localises to the cell wall. The protein resides in the S-layer. The chain is Surface layer protein from Brevibacillus choshinensis.